The following is a 172-amino-acid chain: Low molecular mass early light-inducible protein HV90, chloroplastic (172 aa).

The transit peptide at 1–38 (MATMMSMSSFAGAAVVPRSSASSFGARSLPALGRRALV) directs the protein to the chloroplast. 2 helical membrane-spanning segments follow: residues 106-126 (GQAW…VPLL) and 150-170 (FAML…APFI).

Belongs to the ELIP/psbS family.

The protein localises to the plastid. Its subcellular location is the chloroplast membrane. In terms of biological role, probably involved in the integration of pigments into the mature pigment-protein complexes. This is Low molecular mass early light-inducible protein HV90, chloroplastic from Hordeum vulgare (Barley).